A 140-amino-acid polypeptide reads, in one-letter code: Small ribosomal subunit protein uS12 (140 aa).

D102 bears the 3-methylthioaspartic acid mark.

Belongs to the universal ribosomal protein uS12 family. In terms of assembly, part of the 30S ribosomal subunit. Contacts proteins S8 and S17. May interact with IF1 in the 30S initiation complex.

Its function is as follows. With S4 and S5 plays an important role in translational accuracy. Functionally, interacts with and stabilizes bases of the 16S rRNA that are involved in tRNA selection in the A site and with the mRNA backbone. Located at the interface of the 30S and 50S subunits, it traverses the body of the 30S subunit contacting proteins on the other side and probably holding the rRNA structure together. The combined cluster of proteins S8, S12 and S17 appears to hold together the shoulder and platform of the 30S subunit. In Bacillus cytotoxicus (strain DSM 22905 / CIP 110041 / 391-98 / NVH 391-98), this protein is Small ribosomal subunit protein uS12.